Here is an 804-residue protein sequence, read N- to C-terminus: Probable exo-1,4-beta-xylosidase xlnD (804 aa).

The N-terminal stretch at 1 to 26 (MAHSMSRPVAATAAALLALALPQALA) is a signal peptide. 5 N-linked (GlcNAc...) asparagine glycosylation sites follow: N29, N124, N148, N242, and N251. The active site involves D315. N-linked (GlcNAc...) asparagine glycosylation is found at N357, N390, N413, N444, N455, N573, N576, N665, N696, and N718.

This sequence belongs to the glycosyl hydrolase 3 family.

It is found in the secreted. The enzyme catalyses Hydrolysis of (1-&gt;4)-beta-D-xylans, to remove successive D-xylose residues from the non-reducing termini.. It functions in the pathway glycan degradation; xylan degradation. Its function is as follows. Xylan 1,4-beta-xylosidase involved in the hydrolysis of xylan, a major structural heterogeneous polysaccharide found in plant biomass representing the second most abundant polysaccharide in the biosphere, after cellulose. This is Probable exo-1,4-beta-xylosidase xlnD (xlnD) from Aspergillus niger (strain ATCC MYA-4892 / CBS 513.88 / FGSC A1513).